The sequence spans 99 residues: NADH-quinone oxidoreductase subunit K (99 aa).

3 consecutive transmembrane segments (helical) span residues 3-23 (PENY…GVLI), 28-48 (IIVF…FVTF), and 59-79 (VFAF…LAII).

It belongs to the complex I subunit 4L family. As to quaternary structure, NDH-1 is composed of 14 different subunits. Subunits NuoA, H, J, K, L, M, N constitute the membrane sector of the complex.

It is found in the cell membrane. It carries out the reaction a quinone + NADH + 5 H(+)(in) = a quinol + NAD(+) + 4 H(+)(out). NDH-1 shuttles electrons from NADH, via FMN and iron-sulfur (Fe-S) centers, to quinones in the respiratory chain. The immediate electron acceptor for the enzyme in this species is believed to be a menaquinone. Couples the redox reaction to proton translocation (for every two electrons transferred, four hydrogen ions are translocated across the cytoplasmic membrane), and thus conserves the redox energy in a proton gradient. This is NADH-quinone oxidoreductase subunit K from Rhodococcus jostii (strain RHA1).